We begin with the raw amino-acid sequence, 493 residues long: Transcript termination protein OPG145 (493 aa).

Residues 100–256 (MIESKRPLYI…NSIINIAKLS (157 aa)) form the Helicase ATP-binding domain. 113–120 (LACGFGKT) lines the ATP pocket. A DESH box motif is present at residues 206–209 (DESH). Residues 309-456 (ILDTLVEEFK…IISLSVDKLG (148 aa)) form the Helicase C-terminal domain.

It belongs to the helicase family. Poxviruses subfamily. As to quaternary structure, interacts with OPG087. Might be part of a transcription complex composed at least of OPG087, OPG110, and OPG145.

It localises to the virion. DNA helicase which seems to act as a postreplicative transcription termination factor. Involved in ATP-dependent release of nascent RNA. Forms a stable complex with single-stranded DNA, and to a lesser extent RNA. The polypeptide is Transcript termination protein OPG145 (OPG145) (Homo sapiens (Human)).